The following is a 203-amino-acid chain: Holliday junction branch migration complex subunit RuvA (203 aa).

The segment at 1 to 63 (MIDYLRGTLT…EDVIRLYGFR (63 aa)) is domain I. The tract at residues 64 to 142 (TKEKRSLFEK…ELHPGLFSQK (79 aa)) is domain II. The tract at residues 143–152 (EEQPKPHEKN) is flexible linker. The domain III stretch occupies residues 153–203 (DGNQALDEAMEALKALGYVEKELKKVKPKLEQETLTTDAYIKKALQLMLNR).

It belongs to the RuvA family. As to quaternary structure, homotetramer. Forms an RuvA(8)-RuvB(12)-Holliday junction (HJ) complex. HJ DNA is sandwiched between 2 RuvA tetramers; dsDNA enters through RuvA and exits via RuvB. An RuvB hexamer assembles on each DNA strand where it exits the tetramer. Each RuvB hexamer is contacted by two RuvA subunits (via domain III) on 2 adjacent RuvB subunits; this complex drives branch migration. In the full resolvosome a probable DNA-RuvA(4)-RuvB(12)-RuvC(2) complex forms which resolves the HJ.

The protein resides in the cytoplasm. In terms of biological role, the RuvA-RuvB-RuvC complex processes Holliday junction (HJ) DNA during genetic recombination and DNA repair, while the RuvA-RuvB complex plays an important role in the rescue of blocked DNA replication forks via replication fork reversal (RFR). RuvA specifically binds to HJ cruciform DNA, conferring on it an open structure. The RuvB hexamer acts as an ATP-dependent pump, pulling dsDNA into and through the RuvAB complex. HJ branch migration allows RuvC to scan DNA until it finds its consensus sequence, where it cleaves and resolves the cruciform DNA. This is Holliday junction branch migration complex subunit RuvA from Halalkalibacterium halodurans (strain ATCC BAA-125 / DSM 18197 / FERM 7344 / JCM 9153 / C-125) (Bacillus halodurans).